A 104-amino-acid chain; its full sequence is Photosystem II reaction center Psb28 protein (104 aa).

This sequence belongs to the Psb28 family. As to quaternary structure, part of the photosystem II complex.

It is found in the cellular thylakoid membrane. The polypeptide is Photosystem II reaction center Psb28 protein (Synechococcus sp. (strain JA-2-3B'a(2-13)) (Cyanobacteria bacterium Yellowstone B-Prime)).